Consider the following 376-residue polypeptide: DnaJ homolog subfamily B member 12 (376 aa).

Residue Met1 is modified to N-acetylmethionine. A disordered region spans residues 45–97 (ALIESLNQKPQSTGDHPQPTDTTHTTTKKAGGTETPSANGEAGGGESAKGYTS). Residues 57–84 (TGDHPQPTDTTHTTTKKAGGTETPSANG) show a composition bias toward low complexity. Positions 111–175 (DYYEILGVSR…EKRKQYDQFG (65 aa)) constitute a J domain. His186 carries the pros-methylhistidine modification. Residues 243–263 (GGLGVFVQLMPILILILVSAL) form a helical membrane-spanning segment.

This sequence belongs to the DnaJ family. DNAJB12/DNAJB14 subfamily. In terms of assembly, homodimer and homotetramer. Interacts (via J domain) with HSPA8/Hsc70. Forms a multiprotein complex, at least composed of DNAJB12, DNAJB14, HSPA8/Hsc70 and SGTA; interaction with DNAJB14 and HSPA8/Hsc70 is direct. In terms of processing, methylated at His-186 by METTL9.

It is found in the endoplasmic reticulum membrane. Its subcellular location is the nucleus membrane. Acts as a co-chaperone with HSPA8/Hsc70; required to promote protein folding and trafficking, prevent aggregation of client proteins, and promote unfolded proteins to endoplasmic reticulum-associated degradation (ERAD) pathway. Acts by determining HSPA8/Hsc70's ATPase and polypeptide-binding activities. Can also act independently of HSPA8/Hsc70: together with DNAJB14, acts as a chaperone that promotes maturation of potassium channels KCND2 and KCNH2 by stabilizing nascent channel subunits and assembling them into tetramers. While stabilization of nascent channel proteins is dependent on HSPA8/Hsc70, the process of oligomerization of channel subunits is independent of HSPA8/Hsc70. When overexpressed, forms membranous structures together with DNAJB14 and HSPA8/Hsc70 within the nucleus; the role of these structures, named DJANGOs, is still unclear. The polypeptide is DnaJ homolog subfamily B member 12 (Mus musculus (Mouse)).